Consider the following 588-residue polypeptide: Interferon-activable protein 208 (588 aa).

Residues 5–92 (MVNYYKQIVL…VDILRKEMEK (88 aa)) form the Pyrin domain. Disordered regions lie at residues 157–183 (ATSTSQAEGEPLTPQRFPTTASSSLQT) and 469–526 (EMQN…RRVN). Composition is skewed to polar residues over residues 172 to 183 (RFPTTASSSLQT) and 470 to 487 (MQNPQSGLGTGLSDQPRL).

Belongs to the HIN-200 family.

The polypeptide is Interferon-activable protein 208 (Mus musculus (Mouse)).